Reading from the N-terminus, the 218-residue chain is Oxaloacetate decarboxylase, mitochondrial (218 aa).

Residues 1–18 (MNKFWETGRKIVAVGRNY) constitute a mitochondrion transit peptide. Residues Glu-63, Glu-65, and Asp-94 each contribute to the Mg(2+) site.

Belongs to the FAH family. Homodimer. The cofactor is Mg(2+). Requires Mn(2+) as cofactor.

The protein localises to the mitochondrion. The protein resides in the cytoplasm. It is found in the cytosol. The enzyme catalyses a 3-acylpyruvate + H2O = a carboxylate + pyruvate + H(+). It catalyses the reaction acetylpyruvate + H2O = acetate + pyruvate + H(+). The catalysed reaction is 3-fumarylpyruvate + H2O = fumarate + pyruvate + H(+). It carries out the reaction oxaloacetate + H(+) = pyruvate + CO2. Its function is as follows. Mitochondrial protein that acts as an oxaloacetate decarboxylase (ODx), catalyzing the decarboxylation of oxaloacetate (OAA) to pyruvate and CO(2), and as such is likely a regulatory enzyme in the TCA cycle. Also displays acylpyruvase activity, being able to hydrolyze acetylpyruvate and fumarylpyruvate in vitro. The sequence is that of Oxaloacetate decarboxylase, mitochondrial (fahd1) from Dictyostelium discoideum (Social amoeba).